Consider the following 225-residue polypeptide: Octanoyltransferase (225 aa).

One can recognise a BPL/LPL catalytic domain in the interval 31–214; it reads ENTCDEVWLV…ELTTLLDYTD (184 aa). Residues 70 to 77, 137 to 139, and 150 to 152 each bind substrate; these read RGGQVTYH, SLG, and GLA. Residue Cys-168 is the Acyl-thioester intermediate of the active site.

It belongs to the LipB family.

The protein resides in the cytoplasm. It catalyses the reaction octanoyl-[ACP] + L-lysyl-[protein] = N(6)-octanoyl-L-lysyl-[protein] + holo-[ACP] + H(+). The protein operates within protein modification; protein lipoylation via endogenous pathway; protein N(6)-(lipoyl)lysine from octanoyl-[acyl-carrier-protein]: step 1/2. Functionally, catalyzes the transfer of endogenously produced octanoic acid from octanoyl-acyl-carrier-protein onto the lipoyl domains of lipoate-dependent enzymes. Lipoyl-ACP can also act as a substrate although octanoyl-ACP is likely to be the physiological substrate. The protein is Octanoyltransferase of Aliivibrio fischeri (strain ATCC 700601 / ES114) (Vibrio fischeri).